The following is a 2273-amino-acid chain: Acetyl-CoA carboxylase, mitochondrial (2273 aa).

Residues 1 to 104 (KGKTITHGQS…RGNIHKHTRL (104 aa)) constitute a mitochondrion transit peptide. Residues 134–635 (VISKILIANN…STGWLDDLIL (502 aa)) enclose the Biotin carboxylation domain. Positions 292–484 (KTNFVSVPDD…LPATQLQIAM (193 aa)) constitute an ATP-grasp domain. An ATP-binding site is contributed by 332–337 (GGGGKG). The active site involves R459. The 75-residue stretch at 763-837 (LEAELNPTQV…EAGDVIAKLT (75 aa)) folds into the Biotinyl-binding domain. Position 804 is an N6-biotinyllysine (K804). A CoA carboxyltransferase N-terminal domain is found at 1532–1867 (PYSVKDWLQP…KRDMSPPLLE (336 aa)). Residues 1532–2187 (PYSVKDWLQP…EGQVIKRLQK (656 aa)) form a carboxyltransferase region. CoA contacts are provided by R1776, K2080, and R2082. The CoA carboxyltransferase C-terminal domain maps to 1871-2187 (RWDRDVDFKP…EGQVIKRLQK (317 aa)).

Requires biotin as cofactor.

Its subcellular location is the mitochondrion. The enzyme catalyses hydrogencarbonate + acetyl-CoA + ATP = malonyl-CoA + ADP + phosphate + H(+). The catalysed reaction is N(6)-biotinyl-L-lysyl-[protein] + hydrogencarbonate + ATP = N(6)-carboxybiotinyl-L-lysyl-[protein] + ADP + phosphate + H(+). Its pathway is lipid metabolism; malonyl-CoA biosynthesis; malonyl-CoA from acetyl-CoA: step 1/1. Its function is as follows. Catalyzes the rate-limiting reaction in the mitochondrial fatty acid synthesis (FAS) type II pathway. Responsible for the production of the mitochondrial malonyl-CoA, used for the biosynthesis of the cofactor lipoic acid. This protein carries three functions: biotin carboxyl carrier protein, biotin carboxylase, and carboxyltransferase. This Saccharomyces cerevisiae (strain RM11-1a) (Baker's yeast) protein is Acetyl-CoA carboxylase, mitochondrial (HFA1).